Consider the following 562-residue polypeptide: 3-hydroxy-3-methylglutaryl-coenzyme A reductase 2 (562 aa).

Transmembrane regions (helical) follow at residues 32–56 (ALPL…YFLL) and 77–100 (ICAL…DLIF). Positions 101–146 (RSSSDDDVWVNDGMIPCNQSLDCREVLPIKPNSVDPPRESELDSVE) are linker. N118 carries N-linked (GlcNAc...) asparagine glycosylation. Residues 147 to 562 (DEEIVKLVID…DIGPSSQVNR (416 aa)) are catalytic. The active-site Charge relay system is E240. Residue N304 is glycosylated (N-linked (GlcNAc...) asparagine). Catalysis depends on charge relay system residues K372 and D448. The active-site Proton donor is the H544. Residue N548 is glycosylated (N-linked (GlcNAc...) asparagine). The residue at position 550 (S550) is a Phosphoserine.

This sequence belongs to the HMG-CoA reductase family. As to expression, restricted to young seedlings, roots, and inflorescences. Expressed in root tips, shoot apex, secretory zone of the stigma, microspores, mature pollen grains, gynoecium vascular tissue and fertilized ovules.

It is found in the endoplasmic reticulum membrane. It carries out the reaction (R)-mevalonate + 2 NADP(+) + CoA = (3S)-3-hydroxy-3-methylglutaryl-CoA + 2 NADPH + 2 H(+). The protein operates within metabolic intermediate biosynthesis; (R)-mevalonate biosynthesis; (R)-mevalonate from acetyl-CoA: step 3/3. Its activity is regulated as follows. Regulated at the post-translational level in response to alterations of the sphingolipid and the sterol biosynthetic pathways. Catalyzes the synthesis of mevalonate. The specific precursor of all isoprenoid compounds present in plants. The chain is 3-hydroxy-3-methylglutaryl-coenzyme A reductase 2 (HMG2) from Arabidopsis thaliana (Mouse-ear cress).